A 440-amino-acid polypeptide reads, in one-letter code: Chromosome partition protein MukF (440 aa).

Residues 208–236 (LSETSGTLRELQDTLEAAGDKLQANLLRI) form a leucine-zipper region.

The protein belongs to the MukF family. As to quaternary structure, interacts, and probably forms a ternary complex, with MukE and MukB via its C-terminal region. The complex formation is stimulated by calcium or magnesium. It is required for an interaction between MukE and MukB.

It localises to the cytoplasm. It is found in the nucleoid. Functionally, involved in chromosome condensation, segregation and cell cycle progression. May participate in facilitating chromosome segregation by condensation DNA from both sides of a centrally located replisome during cell division. Not required for mini-F plasmid partitioning. Probably acts via its interaction with MukB and MukE. Overexpression results in anucleate cells. It has a calcium binding activity. The protein is Chromosome partition protein MukF of Yersinia pestis.